The sequence spans 365 residues: sn-glycerol-3-phosphate import ATP-binding protein UgpC (365 aa).

The ABC transporter domain maps to 4–234 (LSLRNVQKHY…PASTFVAGFI (231 aa)). Position 36-43 (36-43 (GPSGCGKS)) interacts with ATP.

The protein belongs to the ABC transporter superfamily. sn-glycerol-3-phosphate importer (TC 3.A.1.1.3) family. The complex is composed of two ATP-binding proteins (UgpC), two transmembrane proteins (UgpA and UgpE) and a solute-binding protein (UgpB).

The protein resides in the cell inner membrane. The enzyme catalyses sn-glycerol 3-phosphate(out) + ATP + H2O = sn-glycerol 3-phosphate(in) + ADP + phosphate + H(+). In terms of biological role, part of the ABC transporter complex UgpBAEC involved in sn-glycerol-3-phosphate (G3P) import. Responsible for energy coupling to the transport system. In Ralstonia nicotianae (strain ATCC BAA-1114 / GMI1000) (Ralstonia solanacearum), this protein is sn-glycerol-3-phosphate import ATP-binding protein UgpC.